Consider the following 69-residue polypeptide: MLKMGVLLFTFLVLFPLTTLELDTDRPVERHAAIKQDLKPQERRGIRLHAPRDECCEPQWCDGACDCCS.

The first 20 residues, 1-20 (MLKMGVLLFTFLVLFPLTTL), serve as a signal peptide directing secretion. Residues 21–52 (ELDTDRPVERHAAIKQDLKPQERRGIRLHAPR) constitute a propeptide that is removed on maturation. 4-carboxyglutamate is present on residues Glu-54 and Glu-57. 3 cysteine pairs are disulfide-bonded: Cys-55/Cys-67, Cys-56/Cys-65, and Cys-61/Cys-68. A 4-hydroxyproline modification is found at Pro-58.

In terms of tissue distribution, expressed by the venom duct.

It is found in the secreted. Its function is as follows. Iota-conotoxins bind to voltage-gated sodium channels and act as agonists by shifting the voltage-dependence of activation to more hyperpolarized levels. This toxin enhances tetrodotoxin-sensitive sodium current in rat dorsal root ganglion neurons. In Conus litteratus (Lettered cone), this protein is Iota-conotoxin LtIIIA.